Reading from the N-terminus, the 331-residue chain is Phosphate acyltransferase (331 aa).

This sequence belongs to the PlsX family. In terms of assembly, homodimer. Probably interacts with PlsY.

It localises to the cytoplasm. The catalysed reaction is a fatty acyl-[ACP] + phosphate = an acyl phosphate + holo-[ACP]. The protein operates within lipid metabolism; phospholipid metabolism. Functionally, catalyzes the reversible formation of acyl-phosphate (acyl-PO(4)) from acyl-[acyl-carrier-protein] (acyl-ACP). This enzyme utilizes acyl-ACP as fatty acyl donor, but not acyl-CoA. The protein is Phosphate acyltransferase of Clostridium acetobutylicum (strain ATCC 824 / DSM 792 / JCM 1419 / IAM 19013 / LMG 5710 / NBRC 13948 / NRRL B-527 / VKM B-1787 / 2291 / W).